The following is a 412-amino-acid chain: Gamma-glutamyl phosphate reductase (412 aa).

The protein belongs to the gamma-glutamyl phosphate reductase family.

The protein localises to the cytoplasm. The enzyme catalyses L-glutamate 5-semialdehyde + phosphate + NADP(+) = L-glutamyl 5-phosphate + NADPH + H(+). The protein operates within amino-acid biosynthesis; L-proline biosynthesis; L-glutamate 5-semialdehyde from L-glutamate: step 2/2. In terms of biological role, catalyzes the NADPH-dependent reduction of L-glutamate 5-phosphate into L-glutamate 5-semialdehyde and phosphate. The product spontaneously undergoes cyclization to form 1-pyrroline-5-carboxylate. This is Gamma-glutamyl phosphate reductase from Bartonella quintana (strain Toulouse) (Rochalimaea quintana).